Here is a 346-residue protein sequence, read N- to C-terminus: MTDDRIIGAGATREDDAADASIRPKRLADYLGQVPVREQMEIYIQAAKGRGDALDHVLIFGPPGLGKTTLSHVIANELGVALRVTSGPVIEKAGDLAALLTNLQPHDVLFIDEIHRLSPVVEEVLYPAMEDFQIDIMIGEGPAARSIKIDLPPFTLIGATTRAGLLTAPLRDRFGIVQRLEFYSVEELTRIVRRSAAILAIDCTADGAGEIARRARGTPRIANRLLRRVRDYAQVKAGGHIDEAVAQAAMKMLKVDPEGFDELDRRLLKTMVDYFDGGPVGIESLAAALSEERGTLEDVVEPYLIQQGFLVRTARGRMATHKAYRHMGLKPKNPPQDLFAEVPDVG.

The segment at 2-183 (TDDRIIGAGA…FGIVQRLEFY (182 aa)) is large ATPase domain (RuvB-L). ATP contacts are provided by residues Ile-22, Arg-23, Gly-64, Lys-67, Thr-68, Thr-69, 130-132 (EDF), Arg-173, Tyr-183, and Arg-220. Thr-68 contacts Mg(2+). The segment at 184-254 (SVEELTRIVR…VAQAAMKMLK (71 aa)) is small ATPAse domain (RuvB-S). Residues 257 to 346 (PEGFDELDRR…DLFAEVPDVG (90 aa)) form a head domain (RuvB-H) region. 3 residues coordinate DNA: Arg-293, Arg-312, and Arg-317.

Belongs to the RuvB family. In terms of assembly, homohexamer. Forms an RuvA(8)-RuvB(12)-Holliday junction (HJ) complex. HJ DNA is sandwiched between 2 RuvA tetramers; dsDNA enters through RuvA and exits via RuvB. An RuvB hexamer assembles on each DNA strand where it exits the tetramer. Each RuvB hexamer is contacted by two RuvA subunits (via domain III) on 2 adjacent RuvB subunits; this complex drives branch migration. In the full resolvosome a probable DNA-RuvA(4)-RuvB(12)-RuvC(2) complex forms which resolves the HJ.

Its subcellular location is the cytoplasm. The enzyme catalyses ATP + H2O = ADP + phosphate + H(+). Functionally, the RuvA-RuvB-RuvC complex processes Holliday junction (HJ) DNA during genetic recombination and DNA repair, while the RuvA-RuvB complex plays an important role in the rescue of blocked DNA replication forks via replication fork reversal (RFR). RuvA specifically binds to HJ cruciform DNA, conferring on it an open structure. The RuvB hexamer acts as an ATP-dependent pump, pulling dsDNA into and through the RuvAB complex. RuvB forms 2 homohexamers on either side of HJ DNA bound by 1 or 2 RuvA tetramers; 4 subunits per hexamer contact DNA at a time. Coordinated motions by a converter formed by DNA-disengaged RuvB subunits stimulates ATP hydrolysis and nucleotide exchange. Immobilization of the converter enables RuvB to convert the ATP-contained energy into a lever motion, pulling 2 nucleotides of DNA out of the RuvA tetramer per ATP hydrolyzed, thus driving DNA branch migration. The RuvB motors rotate together with the DNA substrate, which together with the progressing nucleotide cycle form the mechanistic basis for DNA recombination by continuous HJ branch migration. Branch migration allows RuvC to scan DNA until it finds its consensus sequence, where it cleaves and resolves cruciform DNA. The sequence is that of Holliday junction branch migration complex subunit RuvB from Stenotrophomonas maltophilia (strain R551-3).